We begin with the raw amino-acid sequence, 568 residues long: 2-succinyl-5-enolpyruvyl-6-hydroxy-3-cyclohexene-1-carboxylate synthase (568 aa).

It belongs to the TPP enzyme family. MenD subfamily. In terms of assembly, homodimer. The cofactor is Mg(2+). It depends on Mn(2+) as a cofactor. Thiamine diphosphate is required as a cofactor.

It catalyses the reaction isochorismate + 2-oxoglutarate + H(+) = 5-enolpyruvoyl-6-hydroxy-2-succinyl-cyclohex-3-ene-1-carboxylate + CO2. It functions in the pathway quinol/quinone metabolism; 1,4-dihydroxy-2-naphthoate biosynthesis; 1,4-dihydroxy-2-naphthoate from chorismate: step 2/7. Its pathway is cofactor biosynthesis; phylloquinone biosynthesis. In terms of biological role, catalyzes the thiamine diphosphate-dependent decarboxylation of 2-oxoglutarate and the subsequent addition of the resulting succinic semialdehyde-thiamine pyrophosphate anion to isochorismate to yield 2-succinyl-5-enolpyruvyl-6-hydroxy-3-cyclohexene-1-carboxylate (SEPHCHC). In Synechococcus sp. (strain CC9902), this protein is 2-succinyl-5-enolpyruvyl-6-hydroxy-3-cyclohexene-1-carboxylate synthase.